Here is a 312-residue protein sequence, read N- to C-terminus: Ceroid-lipofuscinosis neuronal protein 6 homolog (312 aa).

Residues 1–10 (MEAAARRRQH) show a composition bias toward basic residues. The disordered stretch occupies residues 1 to 22 (MEAAARRRQHPGAAGGAGAQPG). Helical transmembrane passes span 57–77 (WVLDFGRPIAMLVFPLEWFPL), 82–102 (VGDYFHMAYNIITPFLLLKLI), 112–132 (SVIYVSIITFVMGASIHLVGD), 178–198 (GHCMWYVPFFLILFIYFSGCF), 205–225 (SSMPGAALLLAMPSGLYYWYL), 226–246 (VTEGQIFILFIFTFFAMLALV), and 261–281 (LFLFYSFALTLLLVALWVAWL).

Interacts with CRMP2. Interacts with CLN5. Interacts with CLN5. Interacts with CLN3.

Its subcellular location is the endoplasmic reticulum membrane. It is found in the endoplasmic reticulum. This is Ceroid-lipofuscinosis neuronal protein 6 homolog (CLN6) from Canis lupus familiaris (Dog).